A 193-amino-acid polypeptide reads, in one-letter code: Thioredoxin M4, chloroplastic (193 aa).

The N-terminal 82 residues, 1-82 (MASLLDSVTV…RIACEAQDTT (82 aa)), are a transit peptide targeting the chloroplast. The 110-residue stretch at 83–192 (AAAVEVPNLS…LEKTIERFLV (110 aa)) folds into the Thioredoxin domain. Residues Cys116 and Cys119 each act as nucleophile in the active site. A disulfide bridge connects residues Cys116 and Cys119.

Belongs to the thioredoxin family. Plant M-type subfamily.

It is found in the plastid. It localises to the chloroplast stroma. Thiol-disulfide oxidoreductase involved in the redox regulation of enzyme of the oxidative pentose phosphate pathway. Under reducing conditions, inhibits the glucose-6-phosphate dehydrogenase. This Arabidopsis thaliana (Mouse-ear cress) protein is Thioredoxin M4, chloroplastic.